Reading from the N-terminus, the 43-residue chain is Protein PsbN (43 aa).

Residues I7–F27 traverse the membrane as a helical segment.

The protein belongs to the PsbN family.

It is found in the plastid. The protein resides in the chloroplast thylakoid membrane. May play a role in photosystem I and II biogenesis. The protein is Protein PsbN of Suaeda maritima (Annual sea blite).